Here is a 565-residue protein sequence, read N- to C-terminus: NAD-dependent malic enzyme (565 aa).

Tyr-104 functions as the Proton donor in the catalytic mechanism. Residue Arg-157 participates in NAD(+) binding. The active-site Proton acceptor is Lys-175. Glu-246, Asp-247, and Asp-270 together coordinate a divalent metal cation. Residues Asp-270 and Asn-418 each coordinate NAD(+).

It belongs to the malic enzymes family. As to quaternary structure, homotetramer. Requires Mg(2+) as cofactor. The cofactor is Mn(2+).

It catalyses the reaction (S)-malate + NAD(+) = pyruvate + CO2 + NADH. The enzyme catalyses oxaloacetate + H(+) = pyruvate + CO2. This is NAD-dependent malic enzyme from Photorhabdus laumondii subsp. laumondii (strain DSM 15139 / CIP 105565 / TT01) (Photorhabdus luminescens subsp. laumondii).